Reading from the N-terminus, the 126-residue chain is CD59 glycoprotein (126 aa).

Positions 1–22 (MRARRGFILLLLLAVLCSTGVS) are cleaved as a signal peptide. The region spanning 23–110 (LRCYNCLDPV…NGAISLLGKT (88 aa)) is the UPAR/Ly6 domain. 5 cysteine pairs are disulfide-bonded: Cys25/Cys48, Cys28/Cys35, Cys41/Cys61, Cys67/Cys85, and Cys86/Cys91. Asn38 carries an N-linked (GlcNAc...) asparagine glycan. Asn101 is lipidated: GPI-anchor amidated asparagine. The propeptide at 102-126 (GAISLLGKTALLVTSVLAAILKPCF) is removed in mature form.

As to quaternary structure, interacts with T-cell surface antigen CD2. N- and O-glycosylated.

Its subcellular location is the cell membrane. The protein localises to the secreted. In terms of biological role, potent inhibitor of the complement membrane attack complex (MAC) action, which protects self-cells from damage during complement activation. Acts by binding to the beta-haipins of C8 (C8A and C8B) components of the assembling MAC, forming an intermolecular beta-sheet that prevents incorporation of the multiple copies of C9 required for complete formation of the osmolytic pore. This is CD59 glycoprotein from Rattus norvegicus (Rat).